Consider the following 325-residue polypeptide: NADH-quinone oxidoreductase subunit H (325 aa).

8 helical membrane-spanning segments follow: residues I11–F31, V81–V101, I114–G134, L154–F174, V186–V206, F237–F257, L265–I285, and I304–A324.

Belongs to the complex I subunit 1 family. In terms of assembly, NDH-1 is composed of 13 different subunits. Subunits NuoA, H, J, K, L, M, N constitute the membrane sector of the complex.

The protein resides in the cell inner membrane. The catalysed reaction is a quinone + NADH + 5 H(+)(in) = a quinol + NAD(+) + 4 H(+)(out). In terms of biological role, NDH-1 shuttles electrons from NADH, via FMN and iron-sulfur (Fe-S) centers, to quinones in the respiratory chain. The immediate electron acceptor for the enzyme in this species is believed to be ubiquinone. Couples the redox reaction to proton translocation (for every two electrons transferred, four hydrogen ions are translocated across the cytoplasmic membrane), and thus conserves the redox energy in a proton gradient. This subunit may bind ubiquinone. This is NADH-quinone oxidoreductase subunit H from Escherichia coli O139:H28 (strain E24377A / ETEC).